The chain runs to 226 residues: 2-C-methyl-D-erythritol 4-phosphate cytidylyltransferase (226 aa).

The protein belongs to the IspD/TarI cytidylyltransferase family. IspD subfamily.

The enzyme catalyses 2-C-methyl-D-erythritol 4-phosphate + CTP + H(+) = 4-CDP-2-C-methyl-D-erythritol + diphosphate. The protein operates within isoprenoid biosynthesis; isopentenyl diphosphate biosynthesis via DXP pathway; isopentenyl diphosphate from 1-deoxy-D-xylulose 5-phosphate: step 2/6. Catalyzes the formation of 4-diphosphocytidyl-2-C-methyl-D-erythritol from CTP and 2-C-methyl-D-erythritol 4-phosphate (MEP). The sequence is that of 2-C-methyl-D-erythritol 4-phosphate cytidylyltransferase from Rhodococcus jostii (strain RHA1).